Reading from the N-terminus, the 23-residue chain is Ascaphin-1 (23 aa).

An Asparagine amide modification is found at N23.

In terms of tissue distribution, expressed by the skin glands.

The protein resides in the secreted. Functionally, antimicrobial peptide that shows higher potency against Gram-negative bacteria than against Gram-positive bacteria. Has a very week hemolytic activity. The sequence is that of Ascaphin-1 from Ascaphus truei (Coastal tailed frog).